The sequence spans 225 residues: uncharacterized protein (225 aa).

A helical membrane pass occupies residues 181–203 (INIFVVFMFIIYLLFYIISSTVF).

It localises to the cell membrane. This is an uncharacterized protein from Bacillus anthracis.